A 243-amino-acid chain; its full sequence is Orotidine 5'-phosphate decarboxylase (243 aa).

Residues D18, K39, 66–75 (DLKFHDIPTT), T130, R192, Q201, G221, and R222 contribute to the substrate site. Residue K68 is the Proton donor of the active site.

It belongs to the OMP decarboxylase family. Type 1 subfamily. Homodimer.

It carries out the reaction orotidine 5'-phosphate + H(+) = UMP + CO2. It participates in pyrimidine metabolism; UMP biosynthesis via de novo pathway; UMP from orotate: step 2/2. Its function is as follows. Catalyzes the decarboxylation of orotidine 5'-monophosphate (OMP) to uridine 5'-monophosphate (UMP). The sequence is that of Orotidine 5'-phosphate decarboxylase from Synechococcus sp. (strain CC9311).